The following is a 358-amino-acid chain: DNA replication and repair protein RecF (358 aa).

Position 30–37 (30–37 (GNNGSGKT)) interacts with ATP.

The protein belongs to the RecF family.

It is found in the cytoplasm. Its function is as follows. The RecF protein is involved in DNA metabolism; it is required for DNA replication and normal SOS inducibility. RecF binds preferentially to single-stranded, linear DNA. It also seems to bind ATP. The sequence is that of DNA replication and repair protein RecF from Histophilus somni (strain 129Pt) (Haemophilus somnus).